The chain runs to 311 residues: MRIVFMGTPEFAIPSLEMLVRERYEVAAVVTQPDKPKGRGKKTAMPPVKEFAIKNNIEVLQPSKVKTPEFVSTIRELRPDLLVTAAYGKILPQEVLDIPPYGCVNVHGSLLPKYRGAAPINWAIINGEKVTGITTMYTDAGMDTGDMLLKAEIEISDDMTAGELHDKLACLGAEVLRETLKKIEDSTLQRIPQPHEQATYAPMLDKTVGCINWSKSARDVHNLVRGTNPWPVAFTYYKGQKMKVWVTSVLDEENHNFTPGTILKVGKDGLVVACGVGKVVIKEVQFDSSRRMTVEEYICGHKVGEGEVLGQ.

Position 109–112 (serine 109–proline 112) interacts with (6S)-5,6,7,8-tetrahydrofolate.

It belongs to the Fmt family.

It catalyses the reaction L-methionyl-tRNA(fMet) + (6R)-10-formyltetrahydrofolate = N-formyl-L-methionyl-tRNA(fMet) + (6S)-5,6,7,8-tetrahydrofolate + H(+). Functionally, attaches a formyl group to the free amino group of methionyl-tRNA(fMet). The formyl group appears to play a dual role in the initiator identity of N-formylmethionyl-tRNA by promoting its recognition by IF2 and preventing the misappropriation of this tRNA by the elongation apparatus. The protein is Methionyl-tRNA formyltransferase of Acetivibrio thermocellus (strain ATCC 27405 / DSM 1237 / JCM 9322 / NBRC 103400 / NCIMB 10682 / NRRL B-4536 / VPI 7372) (Clostridium thermocellum).